The following is a 162-amino-acid chain: Phosphopantetheine adenylyltransferase (162 aa).

Ser-11 is a binding site for substrate. ATP contacts are provided by residues 11–12 and His-19; that span reads SF. Substrate-binding residues include Lys-43, Val-76, and Arg-90. Residues 91–93, Glu-101, and 126–132 contribute to the ATP site; these read GLR and HLYISSS.

Belongs to the bacterial CoaD family. As to quaternary structure, homohexamer. Mg(2+) is required as a cofactor.

It localises to the cytoplasm. It carries out the reaction (R)-4'-phosphopantetheine + ATP + H(+) = 3'-dephospho-CoA + diphosphate. The protein operates within cofactor biosynthesis; coenzyme A biosynthesis; CoA from (R)-pantothenate: step 4/5. Functionally, reversibly transfers an adenylyl group from ATP to 4'-phosphopantetheine, yielding dephospho-CoA (dPCoA) and pyrophosphate. This Streptococcus pneumoniae (strain Hungary19A-6) protein is Phosphopantetheine adenylyltransferase.